The primary structure comprises 209 residues: Small ribosomal subunit protein uS4 (209 aa).

The Zn(2+) site is built by cysteine 9, cysteine 12, cysteine 26, and cysteine 31. A C4-type zinc finger spans residues cysteine 9–cysteine 31. The region spanning arginine 100 to leucine 162 is the S4 RNA-binding domain.

Belongs to the universal ribosomal protein uS4 family. As to quaternary structure, part of the 30S ribosomal subunit. Contacts protein S5. The interaction surface between S4 and S5 is involved in control of translational fidelity. It depends on Zn(2+) as a cofactor.

Its function is as follows. One of the primary rRNA binding proteins, it binds directly to 16S rRNA where it helps nucleate assembly of the body and platform of the 30S subunit. The chain is Small ribosomal subunit protein uS4 (rpsD) from Thermus thermophilus (strain ATCC BAA-163 / DSM 7039 / HB27).